The chain runs to 869 residues: Structure-specific endonuclease subunit SLX4 (869 aa).

Residues 40-59 (SPLSLPSPTSLLDFLSTSTS) show a composition bias toward low complexity. 7 disordered regions span residues 40-79 (SPLS…EVLD), 92-116 (NRVV…ESPG), 165-199 (KANQ…INDL), 293-323 (GLSD…NPPK), 351-388 (TLLS…KKNE), 418-437 (ANGH…HISN), and 630-774 (KTSN…ASET). Residues 63–79 (ARSDTDGDKTQGKEVLD) are compositionally biased toward basic and acidic residues. Composition is skewed to polar residues over residues 165-174 (KANQTVSLQP) and 294-311 (LSDS…SATS). Residues 312-322 (KPRRVKAKNPP) show a composition bias toward basic residues. Polar residues-rich tracts occupy residues 647–657 (VDESTQGQSLG) and 664–673 (SIPQTATTQV). A compositionally biased stretch (low complexity) spans 688–700 (VPVPSRRSTSTSK). Residues 765-774 (IPSTGTASET) show a composition bias toward polar residues.

It belongs to the SLX4 family. As to quaternary structure, forms a heterodimer with SLX1. Post-translationally, phosphorylated in response to DNA damage.

The protein resides in the nucleus. In terms of biological role, regulatory subunit of the SLX1-SLX4 structure-specific endonuclease that resolves DNA secondary structures generated during DNA repair and recombination. Has endonuclease activity towards branched DNA substrates, introducing single-strand cuts in duplex DNA close to junctions with ss-DNA. This Paracoccidioides brasiliensis (strain Pb18) protein is Structure-specific endonuclease subunit SLX4.